The chain runs to 437 residues: MAAGTLYTYPENWRAFKALIAAQYSGAQVRVLSAPPHFHFGQTNRTPEFLRKFPAGKVPAFEGDDGFCVFESNAIAYYVSNEELRGSTPEAAAQVVQWVSFADSDIVPPASTWVFPTLGIMHHNKQATENAKEEVRRILGLLDAHLKTRTFLVGERVTLADITVVCTLLWLYKQVLEPSFRQAFPNTNRWFLTCINQPQFRAVLGEVKLCEKMAQFDAKKFAESQPKKDTPRKEKGSREEKQKPQAERKEEKKAAAPAPEEEMDECEQALAAEPKAKDPFAHLPKSTFVLDEFKRKYSNEDTLSVALPYFWEHFDKDGWSLWYSEYRFPEELTQTFMSCNLITGMFQRLDKLRKNAFASVILFGTNNSSSISGVWVFRGQELAFPLSPDWQVDYESYTWRKLDPGSEEAQTLVREYFSWEGAFQHVGKAFNQGKIFK.

Ala2 bears the N-acetylalanine mark. Residues 2-87 (AAGTLYTYPE…YVSNEELRGS (86 aa)) form the GST N-terminal domain. The 129-residue stretch at 88–216 (TPEAAAQVVQ…VKLCEKMAQF (129 aa)) folds into the GST C-terminal domain. Lys147 and Lys212 each carry N6-acetyllysine. Basic and acidic residues predominate over residues 221–254 (FAESQPKKDTPRKEKGSREEKQKPQAERKEEKKA). The tract at residues 221 to 268 (FAESQPKKDTPRKEKGSREEKQKPQAERKEEKKAAAPAPEEEMDECEQ) is disordered. Residue Lys253 forms a Glycyl lysine isopeptide (Lys-Gly) (interchain with G-Cter in SUMO1) linkage. Positions 276–437 (AKDPFAHLPK…KAFNQGKIFK (162 aa)) constitute an EF-1-gamma C-terminal domain. Residue Lys285 forms a Glycyl lysine isopeptide (Lys-Gly) (interchain with G-Cter in SUMO2) linkage. N6-acetyllysine is present on Lys401. N6-acetyllysine; alternate is present on Lys434. Lys434 is subject to N6-malonyllysine; alternate.

In terms of assembly, EF-1 is composed of four subunits: alpha, beta, delta, and gamma.

Probably plays a role in anchoring the complex to other cellular components. This is Elongation factor 1-gamma (EEF1G) from Equus caballus (Horse).